A 390-amino-acid polypeptide reads, in one-letter code: Guanidine hydrolase (390 aa).

Ni(2+) contacts are provided by His174, Asp199, His201, Asp203, Asp291, and Asp293.

Belongs to the arginase family. Homohexamer. Requires Ni(2+) as cofactor.

The protein resides in the cytoplasm. It catalyses the reaction guanidine + H2O = urea + NH4(+). With respect to regulation, activation of GdmH depends on the presence of the accessory proteins GhaA (Sll1078) and GhaB (Sll1079), which load nickel into the active site. Hydrolase activity is slightly activated in the presence of GTP. It does not require ATP or NAD(P)H. Addition of Ca(2+), Mn(2+), Fe(2+) or Fe(3+) has no consistent effects, whereas addition of Co(2+), Cu(2+) or Zn(2+) inhibits the activity. In terms of biological role, catalyzes the hydrolysis of guanidine into urea and ammonium. Is highly specific for free guanidine. At pH 8, also catalyzes the release of urea from methylguanidine but with significantly reduced specific activity compared with that for guanidine. Cannot hydrolyze guanidinoacetate, guanidinopropionate, guanidinobutyrate, agmatine, arginine or creatine. Required to use guanidine as the sole nitrogen source for growth. Overexpression of the gene accelerates guanidine degradation and promotes biomass growth. In Synechocystis sp. (strain ATCC 27184 / PCC 6803 / Kazusa), this protein is Guanidine hydrolase.